A 282-amino-acid polypeptide reads, in one-letter code: Phosphate import ATP-binding protein PstB (282 aa).

In terms of domain architecture, ABC transporter spans 36–277 (IEVKNLNFFY…PARKETEDYI (242 aa)). 68–75 (GPSGCGKS) contributes to the ATP binding site.

This sequence belongs to the ABC transporter superfamily. Phosphate importer (TC 3.A.1.7) family. In terms of assembly, the complex is composed of two ATP-binding proteins (PstB), two transmembrane proteins (PstC and PstA) and a solute-binding protein (PstS).

It localises to the cell inner membrane. The catalysed reaction is phosphate(out) + ATP + H2O = ADP + 2 phosphate(in) + H(+). Its function is as follows. Part of the ABC transporter complex PstSACB involved in phosphate import. Responsible for energy coupling to the transport system. The polypeptide is Phosphate import ATP-binding protein PstB (Burkholderia pseudomallei (strain 1710b)).